The following is a 1592-amino-acid chain: Serine/threonine-protein kinase mrck-1 (1592 aa).

The segment at 1-954 (MAEPPPDDSA…IFSPVSISAM (954 aa)) is involved in homo-dimerization. The 269-residue stretch at 83 to 351 (FEVLKVIGKG…LSDFQLHPFF (269 aa)) folds into the Protein kinase domain. ATP contacts are provided by residues 89–97 (IGKGAFGEV) and lysine 112. Aspartate 207 functions as the Proton acceptor in the catalytic mechanism. The AGC-kinase C-terminal domain maps to 352 to 426 (EGIDWNTIRD…THGSLLSDAR (75 aa)). Serine 415 carries the phosphoserine modification. Tyrosine 416 bears the Phosphotyrosine mark. Coiled-coil stretches lie at residues 444 to 782 (ELME…KNNS) and 811 to 871 (LDLQ…IENS). Residues 782–796 (SPLTTSNYIQNTPSG) show a composition bias toward polar residues. The tract at residues 782 to 801 (SPLTTSNYIQNTPSGWGSRR) is disordered. The segment at 955 to 1534 (ERGHNFERMK…FRTIGKDDRS (580 aa)) is involved in binding to membranes, with a preference for di-phosphorylated phosphoinositides (PIPs). The Phorbol-ester/DAG-type zinc finger occupies 957–1007 (GHNFERMKIKTPTKCGHCTSILIGLDRQGLFCQSCQYACHVSCAERVSQSC). Histidine 958, cysteine 971, cysteine 974, cysteine 988, cysteine 991, histidine 996, cysteine 999, and cysteine 1007 together coordinate Zn(2+). The PH domain occupies 1026-1154 (GTAYEGLVKT…WVVALSELKT (129 aa)). The region spanning 1181–1479 (IRVAQCCAII…KPLSGDGILS (299 aa)) is the CNH domain. Residues 1544–1557 (ISTPSDFMHIVHMG) enclose the CRIB domain. Positions 1544–1557 (ISTPSDFMHIVHMG) are involved in interaction with cdc-42 (GTP-bound). Deletion prevents rescue of a null mutant; furthermore deleted form of mrck-1 is no longer recruited to the cell cortex and instead appears to be completely cytoplasmic.

Belongs to the protein kinase superfamily. AGC Ser/Thr protein kinase family. DMPK subfamily. In terms of assembly, homodimer, via N-terminal domains. Interacts (via the CRIB domain) with cdc-42 (GTP-bound), but with a lower affinity for cdc-42 bound to GDP; the interaction is direct and may play a role in the recruitment of mrck-1 to the apical membrane. It depends on Mg(2+) as a cofactor. In terms of tissue distribution, expressed in embryonic and L4 larval seam cells and in embryonic dorsal and ventral epidermal cells. Also expressed in the pharynx throughout development and in sublateral nerve cords in the L4 larva.

The protein resides in the cytoplasm. Its subcellular location is the cell cortex. The catalysed reaction is L-seryl-[protein] + ATP = O-phospho-L-seryl-[protein] + ADP + H(+). The enzyme catalyses L-threonyl-[protein] + ATP = O-phospho-L-threonyl-[protein] + ADP + H(+). In terms of biological role, serine/threonine-protein kinase. Involved in regulating endoderm precursor cell movements during early gastrulation; activates apical myosin and thereby increases actomyosin contractility and tension in the apical cell cortex, probably as a result of recruitment of mrck-1 to the cortex by a combination of interaction with active cdc-42 and membrane binding. May phosphorylate and inactivate the phosphatase mel-11, and thereby contribute to the regulation of myosin II contractility during embryonic elongation. Involved in controlling canal length and Golgi/ER integrity during excretory canal elongation. The chain is Serine/threonine-protein kinase mrck-1 from Caenorhabditis elegans.